We begin with the raw amino-acid sequence, 154 residues long: Ascorbate-specific PTS system EIIA component (154 aa).

Positions 6 to 150 (SLAENNSIRL…QEVLDLIDRT (145 aa)) constitute a PTS EIIA type-2 domain. Catalysis depends on histidine 68, which acts as the Tele-phosphohistidine intermediate. The residue at position 68 (histidine 68) is a Phosphohistidine.

It is found in the cytoplasm. The phosphoenolpyruvate-dependent sugar phosphotransferase system (sugar PTS), a major carbohydrate active transport system, catalyzes the phosphorylation of incoming sugar substrates concomitantly with their translocation across the cell membrane. The enzyme II UlaABC PTS system is involved in ascorbate transport. This is Ascorbate-specific PTS system EIIA component (ulaC) from Salmonella typhi.